The following is a 358-amino-acid chain: 3-dehydroquinate synthase (358 aa).

NAD(+) contacts are provided by residues 75-80 (SGEGSK), 109-113 (GVLGD), 133-134 (TT), lysine 146, and lysine 155. Zn(2+) contacts are provided by glutamate 188, histidine 245, and histidine 262.

It belongs to the sugar phosphate cyclases superfamily. Dehydroquinate synthase family. It depends on Co(2+) as a cofactor. The cofactor is Zn(2+). Requires NAD(+) as cofactor.

Its subcellular location is the cytoplasm. The enzyme catalyses 7-phospho-2-dehydro-3-deoxy-D-arabino-heptonate = 3-dehydroquinate + phosphate. It participates in metabolic intermediate biosynthesis; chorismate biosynthesis; chorismate from D-erythrose 4-phosphate and phosphoenolpyruvate: step 2/7. Its function is as follows. Catalyzes the conversion of 3-deoxy-D-arabino-heptulosonate 7-phosphate (DAHP) to dehydroquinate (DHQ). In Methylacidiphilum infernorum (isolate V4) (Methylokorus infernorum (strain V4)), this protein is 3-dehydroquinate synthase.